The chain runs to 511 residues: MVLLAAAVCTKAGKAIVSRQFVEMTRTRIEGLLAAFPKLMNTGKQHTFVETESVRYVYQPMEKLYMVLITTKNSNILEDLETLRLFSRVIPEYCRALEENEISEHCFDLIFAFDEIVALGYRENVNLAQIRTFTEMDSHEEKVFRAVRETQEREAKAEMRRKAKELQQARRDAERQGKKAPGFGGFGSSAVSGGSTAAMITETIIETDKPKVAPAPARPSGPSKALKLGAKGKEVDNFVDKLKSEGETIMSSNMGKRTSEATKVHAPPINMESVHMKIEEKITLTCGRDGGLQNMELHGMIMLRISDDKFGRIRLHVENEDKKGVQLQTHPNVDKKLFTAESLIGLKNPEKSFPVNSDVGVLKWRLQTTEESFIPLTINCWPSESGNGCDVNIEYELQEDNLELNDVVITIPLPSGVGAPVIGEIDGEYRHDSRRNTLEWCLPVIDAKNKSGSLEFSIPGQPNDFFPVQVSFISKKNYCNIQVTKVTQVDGNSPVRFSTETTFLVDKYEIL.

Positions 168–177 are enriched in basic and acidic residues; sequence QARRDAERQG. A disordered region spans residues 168–188; the sequence is QARRDAERQGKKAPGFGGFGS. Ser223 is modified (phosphoserine). Lys233 and Lys241 each carry N6-acetyllysine. Position 244 is a phosphoserine (Ser244). One can recognise an MHD domain in the interval 271–511; the sequence is MESVHMKIEE…TFLVDKYEIL (241 aa). 2 positions are modified to N6-acetyllysine: Lys309 and Lys351. Ser493 carries the phosphoserine modification.

The protein belongs to the adaptor complexes medium subunit family. Delta-COP subfamily. In terms of assembly, oligomeric complex that consists of at least the alpha, beta, beta', gamma, delta, epsilon and zeta subunits.

Its subcellular location is the cytoplasm. The protein resides in the golgi apparatus membrane. The protein localises to the cytoplasmic vesicle. It localises to the COPI-coated vesicle membrane. The coatomer is a cytosolic protein complex that binds to dilysine motifs and reversibly associates with Golgi non-clathrin-coated vesicles, which further mediate biosynthetic protein transport from the ER, via the Golgi up to the trans Golgi network. Coatomer complex is required for budding from Golgi membranes, and is essential for the retrograde Golgi-to-ER transport of dilysine-tagged proteins. In mammals, the coatomer can only be recruited by membranes associated to ADP-ribosylation factors (ARFs), which are small GTP-binding proteins; the complex also influences the Golgi structural integrity, as well as the processing, activity, and endocytic recycling of LDL receptors. The protein is Coatomer subunit delta (Arcn1) of Mus musculus (Mouse).